The chain runs to 388 residues: Pepsin F (388 aa).

An N-terminal signal peptide occupies residues 1-15 (MKWLGLLGLVALSEC). Residues 16 to 58 (LVTIPLMKVKSMRENLRENDILLDYLEKHPYRPTYKLLSGQQD) constitute a propeptide, activation peptide. A Peptidase A1 domain is found at 74–385 (YIGIISIGTP…DRANNRIGLA (312 aa)). D92 is an active-site residue. Intrachain disulfides connect C105–C110 and C266–C270. D275 is an active-site residue. A disulfide bridge connects residues C309 and C343.

This sequence belongs to the peptidase A1 family.

The protein localises to the secreted. The catalysed reaction is Preferential cleavage: hydrophobic, preferably aromatic, residues in P1 and P1' positions. Cleaves 1-Phe-|-Val-2, 4-Gln-|-His-5, 13-Glu-|-Ala-14, 14-Ala-|-Leu-15, 15-Leu-|-Tyr-16, 16-Tyr-|-Leu-17, 23-Gly-|-Phe-24, 24-Phe-|-Phe-25 and 25-Phe-|-Tyr-26 bonds in the B chain of insulin.. In terms of biological role, shows particularly broad specificity; although bonds involving phenylalanine and leucine are preferred, many others are also cleaved to some extent. The chain is Pepsin F from Oryctolagus cuniculus (Rabbit).